The primary structure comprises 679 residues: Glycine--tRNA ligase beta subunit (679 aa).

This sequence belongs to the class-II aminoacyl-tRNA synthetase family. Tetramer of two alpha and two beta subunits.

Its subcellular location is the cytoplasm. The enzyme catalyses tRNA(Gly) + glycine + ATP = glycyl-tRNA(Gly) + AMP + diphosphate. The polypeptide is Glycine--tRNA ligase beta subunit (Streptococcus agalactiae serotype Ia (strain ATCC 27591 / A909 / CDC SS700)).